Here is a 282-residue protein sequence, read N- to C-terminus: Cytochrome c1 (282 aa).

Positions 1 to 24 are cleaved as a signal peptide; the sequence is MTIKLRFVASLALVFGLAAASVPA. Cys62, Cys65, His66, and Met207 together coordinate heme c. A helical transmembrane segment spans residues 253–273; that stretch reads WWVLGFLVIFTGLLVATKIVV.

In terms of assembly, the main subunits of complex b-c1 are: cytochrome b, cytochrome c1 and the Rieske protein. Binds 1 heme c group covalently per subunit.

The protein localises to the cell membrane. Functionally, component of the ubiquinol-cytochrome c reductase complex (complex III or cytochrome b-c1 complex), which is a respiratory chain that generates an electrochemical potential coupled to ATP synthesis. c1 functions as an electron donor to cytochrome c. This Blastochloris viridis (Rhodopseudomonas viridis) protein is Cytochrome c1 (petC).